The following is a 427-amino-acid chain: Enolase (427 aa).

Gln-163 provides a ligand contact to (2R)-2-phosphoglycerate. Glu-205 (proton donor) is an active-site residue. Residues Asp-242, Glu-285, and Asp-312 each contribute to the Mg(2+) site. 4 residues coordinate (2R)-2-phosphoglycerate: Lys-337, Arg-366, Ser-367, and Lys-388. Residue Lys-337 is the Proton acceptor of the active site.

It belongs to the enolase family. Mg(2+) serves as cofactor.

It localises to the cytoplasm. It is found in the secreted. Its subcellular location is the cell surface. It carries out the reaction (2R)-2-phosphoglycerate = phosphoenolpyruvate + H2O. It participates in carbohydrate degradation; glycolysis; pyruvate from D-glyceraldehyde 3-phosphate: step 4/5. Its function is as follows. Catalyzes the reversible conversion of 2-phosphoglycerate (2-PG) into phosphoenolpyruvate (PEP). It is essential for the degradation of carbohydrates via glycolysis. The polypeptide is Enolase (Rhodopseudomonas palustris (strain ATCC BAA-98 / CGA009)).